We begin with the raw amino-acid sequence, 327 residues long: RING-H2 finger protein ATL34 (327 aa).

The first 26 residues, 1–26 (MTIGKSPILLHHHVIFLLLLVLQVSG), serve as a signal peptide directing secretion. A helical transmembrane segment spans residues 47–67 (AVIIAMLMFTLLFSMLACCVC). The segment at 128 to 170 (CAICLNEFEDEETLRLMPPCSHAFHASCIDVWLSSRSTCPVCR) adopts an RING-type; atypical zinc-finger fold. Residues 280–327 (LSHMKTLPQARSSREGYRSGSVGSERRGKGKEKEFGEGSFDRLKAEMV) are disordered. Residues 303–327 (SERRGKGKEKEFGEGSFDRLKAEMV) are compositionally biased toward basic and acidic residues.

It belongs to the RING-type zinc finger family. ATL subfamily.

The protein resides in the membrane. It carries out the reaction S-ubiquitinyl-[E2 ubiquitin-conjugating enzyme]-L-cysteine + [acceptor protein]-L-lysine = [E2 ubiquitin-conjugating enzyme]-L-cysteine + N(6)-ubiquitinyl-[acceptor protein]-L-lysine.. It participates in protein modification; protein ubiquitination. This chain is RING-H2 finger protein ATL34 (ATL34), found in Arabidopsis thaliana (Mouse-ear cress).